Consider the following 472-residue polypeptide: Tryptophan--tRNA ligase, cytoplasmic (472 aa).

Residues 9-65 (SPLELFNSIATQGELVRSLKAGNASKDEIDSAVKMLLSLKMSYKAAMGEDYKANCPP) enclose the WHEP-TRS domain. Position 155 is an N6-succinyllysine (lysine 155). A 'HIGH' region motif is present at residues 165 to 174 (PSSEAMHVGH). The short motif at 350-354 (KMSAS) is the 'KMSKS' region element. The residue at position 352 (serine 352) is a Phosphoserine.

The protein belongs to the class-I aminoacyl-tRNA synthetase family. In terms of assembly, homodimer. Interacts with oxidized form of GAPDH. Proteolytic cleavage generates 2 forms; T1-TrpRS and T2-TrpRS.

The protein resides in the cytoplasm. The catalysed reaction is tRNA(Trp) + L-tryptophan + ATP = L-tryptophyl-tRNA(Trp) + AMP + diphosphate + H(+). Catalyzes the attachment of tryptophan to tRNA(Trp) in a two-step reaction: tryptophan is first activated by ATP to form Trp-AMP and then transferred to the acceptor end of the tRNA(Trp). Could also possess an angiostatic activity. This is Tryptophan--tRNA ligase, cytoplasmic (WARS1) from Pongo abelii (Sumatran orangutan).